The following is a 449-amino-acid chain: MKKKSFSIVIAGGGSTFTPGIVLMLLDHLEEFPIRKLKLYDNDKERQDRIAGACDVFIREKAPDIEFAATTDPEEAFTDVDFVMAHIRVGKYAMRALDEQIPLKYGVVGQETCGPGGIAYGMRSIGGVLEILDYMEKYSPDAWMLNYSNPAAIVAEATRRLRPNSKILNICDMPVGIEDRMAQILGLSSRKEMKVRYYGLNHFGWWTSIQDQEGNDLMPKLKEHVSQYGYIPKTEAEAVEASWNDTFAKARDVQAADPDTLPNTYLQYYLFPDDMVKKSNPNHTRANEVMEGREAFIFSQCDMITREQSSENSEIKIDDHASYIVDLARAIAYNTGERMLLIVENNGAIANFDPTAMVEVPCIVGSNGPEPITVGTIPQFQKGLMEQQVSVEKLTVEAWAEKSFQKLWQALILSKTVPNARVARLILEDLVEANKDFWPELDQSPTRIS.

Residue 6-72 participates in NAD(+) binding; sequence FSIVIAGGGS…PDIEFAATTD (67 aa). 2 residues coordinate substrate: Arg-95 and Asn-149. Cys-171 serves as a coordination point for Mn(2+). Asp-172 serves as the catalytic Proton donor. Mn(2+) is bound at residue His-202. Residue Tyr-265 is the Proton acceptor of the active site. Arg-285 contacts substrate.

The protein belongs to the glycosyl hydrolase 4 family. As to quaternary structure, homotetramer. It depends on Mn(2+) as a cofactor. Requires Fe(2+) as cofactor. Co(2+) serves as cofactor. The cofactor is Ni(2+). NAD(+) is required as a cofactor.

The enzyme catalyses alpha-maltose 6'-phosphate + H2O = D-glucose 6-phosphate + D-glucose. With respect to regulation, cellobiose-6'-phosphate and 6-phospho-beta-D-glucopyranoside are not substrates but competitive inhibitors of GlvA. Hydrolyzes maltose-6'-phosphate and trehalose-6'-phosphate. Is involved in the catabolism of alpha-glycosides accumulated via a phosphoenolpyruvate-dependent maltose phosphotransferase system (PEP-PTS). Is also able to significantly catalyze the hydrolysis of both 6-phospho-alpha- and 6-phospho-beta-glucosides containing activated leaving groups such as p-nitrophenol and does so with retention and inversion, respectively, of the substrate anomeric configuration. The sequence is that of Maltose-6'-phosphate glucosidase (glvA) from Bacillus subtilis (strain 168).